Consider the following 469-residue polypeptide: 3-isopropylmalate dehydratase large subunit (469 aa).

Cys347, Cys407, and Cys410 together coordinate [4Fe-4S] cluster.

The protein belongs to the aconitase/IPM isomerase family. LeuC type 1 subfamily. In terms of assembly, heterodimer of LeuC and LeuD. [4Fe-4S] cluster is required as a cofactor.

The enzyme catalyses (2R,3S)-3-isopropylmalate = (2S)-2-isopropylmalate. It participates in amino-acid biosynthesis; L-leucine biosynthesis; L-leucine from 3-methyl-2-oxobutanoate: step 2/4. Functionally, catalyzes the isomerization between 2-isopropylmalate and 3-isopropylmalate, via the formation of 2-isopropylmaleate. The sequence is that of 3-isopropylmalate dehydratase large subunit from Synechococcus sp. (strain RCC307).